The sequence spans 699 residues: Conditioned medium factor (699 aa).

The N-terminal stretch at 1–18 (MRLLLLLILIITINFSYG) is a signal peptide. N-linked (GlcNAc...) asparagine glycans are attached at residues Asn130, Asn283, Asn346, and Asn430. A disordered region spans residues 680–699 (SPQQTTNTEYNKEMSSNSVW).

In terms of processing, N- and O-glycosylated. Post-translationally, the N-terminus is blocked.

Its function is as follows. Involved in cell density sensing and might synchronize the onset of development by triggering aggregation when a majority of the cells in a given area have starved. This chain is Conditioned medium factor (cmfA), found in Dictyostelium discoideum (Social amoeba).